A 377-amino-acid chain; its full sequence is tRNA/tmRNA (uracil-C(5))-methyltransferase (377 aa).

Residues Gln-199, Tyr-227, Asn-232, Glu-248, and Asp-308 each coordinate S-adenosyl-L-methionine. Residue Cys-333 is the Nucleophile of the active site. Catalysis depends on Glu-367, which acts as the Proton acceptor.

The protein belongs to the class I-like SAM-binding methyltransferase superfamily. RNA M5U methyltransferase family. TrmA subfamily.

The enzyme catalyses uridine(54) in tRNA + S-adenosyl-L-methionine = 5-methyluridine(54) in tRNA + S-adenosyl-L-homocysteine + H(+). It catalyses the reaction uridine(341) in tmRNA + S-adenosyl-L-methionine = 5-methyluridine(341) in tmRNA + S-adenosyl-L-homocysteine + H(+). Functionally, dual-specificity methyltransferase that catalyzes the formation of 5-methyluridine at position 54 (m5U54) in all tRNAs, and that of position 341 (m5U341) in tmRNA (transfer-mRNA). In Aeromonas hydrophila subsp. hydrophila (strain ATCC 7966 / DSM 30187 / BCRC 13018 / CCUG 14551 / JCM 1027 / KCTC 2358 / NCIMB 9240 / NCTC 8049), this protein is tRNA/tmRNA (uracil-C(5))-methyltransferase.